The chain runs to 75 residues: Small ribosomal subunit protein bS18 (75 aa).

The protein belongs to the bacterial ribosomal protein bS18 family. In terms of assembly, part of the 30S ribosomal subunit. Forms a tight heterodimer with protein bS6.

Its function is as follows. Binds as a heterodimer with protein bS6 to the central domain of the 16S rRNA, where it helps stabilize the platform of the 30S subunit. The polypeptide is Small ribosomal subunit protein bS18 (Idiomarina loihiensis (strain ATCC BAA-735 / DSM 15497 / L2-TR)).